Consider the following 46-residue polypeptide: DVQCGEGHFCHDXQTCCRASQGGXACCPYSQGVCCADQRHCCPVGF.

2 cysteine pairs are disulfide-bonded: Cys4/Cys16 and Cys10/Cys26.

The protein belongs to the granulin family.

The protein localises to the secreted. Functionally, has antimicrobial activity against Gram-negative and Gram-positive bacteria. The chain is Antimicrobial peptide eNAP-1 from Equus caballus (Horse).